A 471-amino-acid chain; its full sequence is Serine/threonine-protein kinase sid1 (471 aa).

The Protein kinase domain maps to 9–260 (YTLLRKLGSG…AKELLQHPFI (252 aa)). ATP contacts are provided by residues 15 to 23 (LGSGSFGVV) and K38. The active-site Proton acceptor is the D129.

It belongs to the protein kinase superfamily. STE Ser/Thr protein kinase family. STE20 subfamily. In terms of assembly, interacts with cdc14.

The protein resides in the cytoplasm. It is found in the cytoskeleton. It localises to the microtubule organizing center. The protein localises to the spindle pole body. It carries out the reaction L-seryl-[protein] + ATP = O-phospho-L-seryl-[protein] + ADP + H(+). The enzyme catalyses L-threonyl-[protein] + ATP = O-phospho-L-threonyl-[protein] + ADP + H(+). Has a role in the septation initiation network (SIN) required for cytokinesis. This Schizosaccharomyces pombe (strain 972 / ATCC 24843) (Fission yeast) protein is Serine/threonine-protein kinase sid1 (sid1).